Reading from the N-terminus, the 564-residue chain is Ovochymase-2 (564 aa).

The first 22 residues, methionine 1 to serine 22, serve as a signal peptide directing secretion. Positions alanine 23–arginine 51 are cleaved as a propeptide — activation peptide. Positions isoleucine 52–glutamine 299 constitute a Peptidase S1 domain. Residues cysteine 77 and cysteine 93 are joined by a disulfide bond. Histidine 92 serves as the catalytic Charge relay system. Residue asparagine 104 is glycosylated (N-linked (GlcNAc...) asparagine). Position 119 (glutamate 119) interacts with Ca(2+). Catalysis depends on aspartate 142, which acts as the Charge relay system. 5 disulfides stabilise this stretch: cysteine 176–cysteine 246, cysteine 207–cysteine 225, cysteine 236–cysteine 265, cysteine 311–cysteine 341, and cysteine 365–cysteine 384. The active-site Charge relay system is the serine 240. 2 consecutive CUB domains span residues cysteine 311–leucine 421 and cysteine 431–isoleucine 543. N-linked (GlcNAc...) asparagine glycans are attached at residues asparagine 415 and asparagine 451. 2 disulfides stabilise this stretch: cysteine 431–cysteine 458 and cysteine 485–cysteine 506. Residue asparagine 530 is glycosylated (N-linked (GlcNAc...) asparagine).

The protein belongs to the peptidase S1 family.

It localises to the secreted. Functionally, may be required for sperm ADAM3 processing and consequential sperm fertilizing ability. In vitro, has an endopeptidase activity. The polypeptide is Ovochymase-2 (Homo sapiens (Human)).